The chain runs to 469 residues: Cysteine protease ATG4D (469 aa).

Over residues Met-1–Gly-29 the composition is skewed to polar residues. The disordered stretch occupies residues Met-1 to Thr-41. Residue Cys-131 is the Nucleophile of the active site. The segment at Ile-169–Tyr-191 is disordered. Positions Ser-171 to Leu-182 are enriched in low complexity. Active-site residues include Asp-356 and His-358. The tract at residues Gln-436–Leu-469 is disordered.

Belongs to the peptidase C54 family.

The protein resides in the cytoplasm. It carries out the reaction [protein]-C-terminal L-amino acid-glycyl-phosphatidylethanolamide + H2O = [protein]-C-terminal L-amino acid-glycine + a 1,2-diacyl-sn-glycero-3-phosphoethanolamine. It catalyses the reaction [protein]-C-terminal L-amino acid-glycyl-phosphatidylserine + H2O = [protein]-C-terminal L-amino acid-glycine + a 1,2-diacyl-sn-glycero-3-phospho-L-serine. Functionally, cysteine protease that plays a key role in autophagy by mediating both proteolytic activation and delipidation of ATG8 family proteins. The protease activity is required for proteolytic activation of ATG8 family proteins to reveal a C-terminal glycine. Exposure of the glycine at the C-terminus is essential for ATG8 proteins conjugation to phosphatidylethanolamine (PE) and insertion to membranes, which is necessary for autophagy. In addition to the protease activity, also mediates delipidation of ATG8 family proteins. Catalyzes delipidation of PE-conjugated forms of ATG8 proteins during macroautophagy. Also involved in non-canonical autophagy, a parallel pathway involving conjugation of ATG8 proteins to single membranes at endolysosomal compartments, by catalyzing delipidation of ATG8 proteins conjugated to phosphatidylserine (PS). The sequence is that of Cysteine protease ATG4D from Xenopus laevis (African clawed frog).